The chain runs to 61 residues: Large ribosomal subunit protein bL32 (61 aa).

Residues 1–22 form a disordered region; sequence MAVPKQKSSKSRGRKRRTHQKV. The span at 7 to 20 shows a compositional bias: basic residues; that stretch reads KSSKSRGRKRRTHQ.

This sequence belongs to the bacterial ribosomal protein bL32 family.

This chain is Large ribosomal subunit protein bL32, found in Desulforapulum autotrophicum (strain ATCC 43914 / DSM 3382 / VKM B-1955 / HRM2) (Desulfobacterium autotrophicum).